Consider the following 325-residue polypeptide: 5-dehydro-2-deoxygluconokinase (325 aa).

The protein belongs to the carbohydrate kinase PfkB family.

It catalyses the reaction 5-dehydro-2-deoxy-D-gluconate + ATP = 6-phospho-5-dehydro-2-deoxy-D-gluconate + ADP + H(+). It participates in polyol metabolism; myo-inositol degradation into acetyl-CoA; acetyl-CoA from myo-inositol: step 5/7. Its function is as follows. Catalyzes the phosphorylation of 5-dehydro-2-deoxy-D-gluconate (2-deoxy-5-keto-D-gluconate or DKG) to 6-phospho-5-dehydro-2-deoxy-D-gluconate (DKGP). In Listeria monocytogenes serovar 1/2a (strain ATCC BAA-679 / EGD-e), this protein is 5-dehydro-2-deoxygluconokinase.